Reading from the N-terminus, the 176-residue chain is Ferritin, spleen middle subunit (176 aa).

The region spanning 7–156 (QNYHRDCEAA…DFITNLSRMD (150 aa)) is the Ferritin-like diiron domain. Glu-24, Glu-59, His-62, Glu-104, and Gln-138 together coordinate Fe cation.

Belongs to the ferritin family. As to quaternary structure, in spleen, forms a homomer. The functional molecule forms a roughly spherical shell with a diameter of 12 nm and contains a central cavity into which the insoluble mineral iron core is deposited. In terms of tissue distribution, spleen (at protein level).

It catalyses the reaction 4 Fe(2+) + O2 + 4 H(+) = 4 Fe(3+) + 2 H2O. In terms of biological role, stores iron in a soluble, non-toxic, readily available form. Important for iron homeostasis. Has ferroxidase activity. Iron is taken up in the ferrous form and deposited as ferric hydroxides after oxidation. The polypeptide is Ferritin, spleen middle subunit (Trematomus bernacchii (Emerald rockcod)).